Consider the following 424-residue polypeptide: 3-phosphoshikimate 1-carboxyvinyltransferase (424 aa).

Residues lysine 21, serine 22, and arginine 26 each coordinate 3-phosphoshikimate. Residue lysine 21 coordinates phosphoenolpyruvate. Residues glycine 92 and arginine 120 each coordinate phosphoenolpyruvate. 3-phosphoshikimate contacts are provided by serine 163, serine 164, glutamine 165, serine 191, aspartate 306, and lysine 333. Position 165 (glutamine 165) interacts with phosphoenolpyruvate. The active-site Proton acceptor is aspartate 306. Residues arginine 337, arginine 379, and lysine 405 each contribute to the phosphoenolpyruvate site.

The protein belongs to the EPSP synthase family. In terms of assembly, monomer.

The protein resides in the cytoplasm. It catalyses the reaction 3-phosphoshikimate + phosphoenolpyruvate = 5-O-(1-carboxyvinyl)-3-phosphoshikimate + phosphate. It participates in metabolic intermediate biosynthesis; chorismate biosynthesis; chorismate from D-erythrose 4-phosphate and phosphoenolpyruvate: step 6/7. Its function is as follows. Catalyzes the transfer of the enolpyruvyl moiety of phosphoenolpyruvate (PEP) to the 5-hydroxyl of shikimate-3-phosphate (S3P) to produce enolpyruvyl shikimate-3-phosphate and inorganic phosphate. This is 3-phosphoshikimate 1-carboxyvinyltransferase from Clostridium perfringens (strain SM101 / Type A).